The sequence spans 431 residues: Tol-Pal system protein TolB (431 aa).

The signal sequence occupies residues 1–19 (MKRLLFFLICVFFSKTSYS).

It belongs to the TolB family. The Tol-Pal system is composed of five core proteins: the inner membrane proteins TolA, TolQ and TolR, the periplasmic protein TolB and the outer membrane protein Pal. They form a network linking the inner and outer membranes and the peptidoglycan layer.

Its subcellular location is the periplasm. Functionally, part of the Tol-Pal system, which plays a role in outer membrane invagination during cell division and is important for maintaining outer membrane integrity. TolB occupies a key intermediary position in the Tol-Pal system because it communicates directly with both membrane-embedded components, Pal in the outer membrane and TolA in the inner membrane. This is Tol-Pal system protein TolB from Wigglesworthia glossinidia brevipalpis.